The following is a 179-amino-acid chain: ATP synthase subunit delta (179 aa).

It belongs to the ATPase delta chain family. As to quaternary structure, F-type ATPases have 2 components, F(1) - the catalytic core - and F(0) - the membrane proton channel. F(1) has five subunits: alpha(3), beta(3), gamma(1), delta(1), epsilon(1). F(0) has three main subunits: a(1), b(2) and c(10-14). The alpha and beta chains form an alternating ring which encloses part of the gamma chain. F(1) is attached to F(0) by a central stalk formed by the gamma and epsilon chains, while a peripheral stalk is formed by the delta and b chains.

It localises to the cell inner membrane. Its function is as follows. F(1)F(0) ATP synthase produces ATP from ADP in the presence of a proton or sodium gradient. F-type ATPases consist of two structural domains, F(1) containing the extramembraneous catalytic core and F(0) containing the membrane proton channel, linked together by a central stalk and a peripheral stalk. During catalysis, ATP synthesis in the catalytic domain of F(1) is coupled via a rotary mechanism of the central stalk subunits to proton translocation. In terms of biological role, this protein is part of the stalk that links CF(0) to CF(1). It either transmits conformational changes from CF(0) to CF(1) or is implicated in proton conduction. This chain is ATP synthase subunit delta, found in Anaeromyxobacter dehalogenans (strain 2CP-1 / ATCC BAA-258).